The chain runs to 163 residues: Nucleotide-binding protein HS_0688 (163 aa).

Belongs to the YajQ family.

Functionally, nucleotide-binding protein. In Histophilus somni (strain 129Pt) (Haemophilus somnus), this protein is Nucleotide-binding protein HS_0688.